Here is a 350-residue protein sequence, read N- to C-terminus: tRNA uridine(34) hydroxylase (350 aa).

One can recognise a Rhodanese domain in the interval 146–240 (DDPDAVFIDM…YARRAREQGL (95 aa)). Residue C200 is the Cysteine persulfide intermediate of the active site. Over residues 319 to 328 (RRRRAGRENG) the composition is skewed to basic and acidic residues. The tract at residues 319–350 (RRRRAGRENGNKIFNKSRGRLNSKLSIPDPAE) is disordered.

Belongs to the TrhO family.

The catalysed reaction is uridine(34) in tRNA + AH2 + O2 = 5-hydroxyuridine(34) in tRNA + A + H2O. Catalyzes oxygen-dependent 5-hydroxyuridine (ho5U) modification at position 34 in tRNAs. The protein is tRNA uridine(34) hydroxylase of Salmonella gallinarum (strain 287/91 / NCTC 13346).